An 853-amino-acid chain; its full sequence is Leucine-rich repeat and death domain-containing protein 1 (853 aa).

The tract at residues 1–78 is disordered; it reads MSEDGSNVEP…EEKNTGIPFS (78 aa). Acidic residues predominate over residues 19–31; sequence LEEPGSEISDLLD. A compositionally biased stretch (polar residues) spans 56-65; sequence QSAASFTSQL. LRR repeat units lie at residues 133-157, 159-180, 183-204, 206-227, 229-251, 252-274, 275-297, 298-319, 321-342, 344-365, 367-388, 390-411, 413-435, 436-457, 459-481, 482-503, 505-527, 528-549, 551-573, 574-596, 597-618, 620-641, 646-668, 669-690, 692-713, and 715-736; these read MKSD…IVKV, YVKY…DPGD, GLEI…IQLF, NLKI…LLQL, NMRQ…EHLR, YLET…SSLK, NLRI…CFLP, KLNS…VREL, NLES…IFQL, KIKE…IENF, ELRL…ISHC, NLES…IRKL, NLRQ…SHLS, NIHI…IKNC, KITR…CALQ, SLDY…MSFS, QLLH…CSLT, NLEY…ISAM, SLHV…CSLK, NLRV…SKLK, RIQK…LCQL, TLEE…PEEV, QLKI…GELR, SLVS…FLSL, VLQS…IYKL, and SLKE…ICKG. The Death domain occupies 757–845; that stretch reads LEKIFNIVAN…DIMDKITALN (89 aa).

This is Leucine-rich repeat and death domain-containing protein 1 (Lrrd1) from Mus musculus (Mouse).